Here is a 171-residue protein sequence, read N- to C-terminus: uncharacterized protein (171 aa).

2 disordered regions span residues 1 to 50 and 71 to 91; these read MSHR…THLS and RIDK…PMMK.

This is an uncharacterized protein from Caenorhabditis elegans.